The following is a 345-amino-acid chain: Transcription factor STKL1 (345 aa).

The tract at residues 1–145 is disordered; sequence MASLENPAID…KKGHAQRVWS (145 aa). A compositionally biased stretch (low complexity) spans 11 to 22; the sequence is SSSEFESSSEEI. The span at 23–32 shows a compositional bias: basic and acidic residues; that stretch reads SSSKESKPKE. Polar residues predominate over residues 37-46; sequence VPSTKTLNSP. Serine 105 carries the post-translational modification Phosphoserine. Residues 114–137 are compositionally biased toward basic and acidic residues; sequence RASEGTTSRDMHVKRIKKEGDNKK.

Belongs to the GeBP family. As to expression, expressed strongly in leaves and flowers, weakly in roots, and very weakly in stems.

The protein localises to the nucleus. In terms of biological role, transcription repressor that binds DNA in a sequence-specific manner, 5'-GCCT-3', to regulate the expression of PGR. Acts as a modulatory component for the glucose-triggered developmental leaf growth process. In Arabidopsis thaliana (Mouse-ear cress), this protein is Transcription factor STKL1.